The primary structure comprises 262 residues: Carbonic anhydrase 13 (262 aa).

In terms of domain architecture, Alpha-carbonic anhydrase spans L4–F261. H65 acts as the Proton donor/acceptor in catalysis. Residues H95, H97, and H120 each contribute to the Zn(2+) site. Residue T200–V201 participates in substrate binding.

Belongs to the alpha-carbonic anhydrase family. Zn(2+) is required as a cofactor. As to expression, expressed in thymus, small intestine, spleen, prostate, ovary, colon and testis.

It catalyses the reaction hydrogencarbonate + H(+) = CO2 + H2O. Inhibited by acetazolamide. Its function is as follows. Reversible hydration of carbon dioxide. In Homo sapiens (Human), this protein is Carbonic anhydrase 13 (CA13).